Here is a 390-residue protein sequence, read N- to C-terminus: Oxygen-dependent coproporphyrinogen-III oxidase (390 aa).

Residues 131–140 (VLQDGDVFEK) are important for dimerization. Residue Ser-181 coordinates substrate. Residue His-195 is the Proton donor of the active site. Residues 197 to 199 (NYR) and 348 to 353 (GARYES) contribute to the substrate site. An important for dimerization region spans residues 329 to 365 (YVEFNLIYDRGTKFGLYTPGARYESILMSLPLHARWE).

Belongs to the aerobic coproporphyrinogen-III oxidase family. As to quaternary structure, homodimer.

The catalysed reaction is coproporphyrinogen III + O2 + 2 H(+) = protoporphyrinogen IX + 2 CO2 + 2 H2O. It participates in porphyrin-containing compound metabolism; protoporphyrin-IX biosynthesis; protoporphyrinogen-IX from coproporphyrinogen-III (O2 route): step 1/1. In terms of biological role, involved in the heme biosynthesis. Catalyzes the aerobic oxidative decarboxylation of propionate groups of rings A and B of coproporphyrinogen-III to yield the vinyl groups in protoporphyrinogen-IX. The protein is Oxygen-dependent coproporphyrinogen-III oxidase (Coprox) of Drosophila melanogaster (Fruit fly).